A 634-amino-acid polypeptide reads, in one-letter code: Chaperone protein DnaK (634 aa).

Residue T193 is modified to Phosphothreonine; by autocatalysis. The segment at G597 to K634 is disordered. Low complexity predominate over residues N600 to N613. Over residues E616–K634 the composition is skewed to basic and acidic residues.

It belongs to the heat shock protein 70 family.

In terms of biological role, acts as a chaperone. The chain is Chaperone protein DnaK from Ehrlichia canis (strain Jake).